The chain runs to 94 residues: Pyrimidine/purine nucleoside phosphorylase (94 aa).

This sequence belongs to the nucleoside phosphorylase PpnP family.

It catalyses the reaction a purine D-ribonucleoside + phosphate = a purine nucleobase + alpha-D-ribose 1-phosphate. The catalysed reaction is adenosine + phosphate = alpha-D-ribose 1-phosphate + adenine. It carries out the reaction cytidine + phosphate = cytosine + alpha-D-ribose 1-phosphate. The enzyme catalyses guanosine + phosphate = alpha-D-ribose 1-phosphate + guanine. It catalyses the reaction inosine + phosphate = alpha-D-ribose 1-phosphate + hypoxanthine. The catalysed reaction is thymidine + phosphate = 2-deoxy-alpha-D-ribose 1-phosphate + thymine. It carries out the reaction uridine + phosphate = alpha-D-ribose 1-phosphate + uracil. The enzyme catalyses xanthosine + phosphate = alpha-D-ribose 1-phosphate + xanthine. Catalyzes the phosphorolysis of diverse nucleosides, yielding D-ribose 1-phosphate and the respective free bases. Can use uridine, adenosine, guanosine, cytidine, thymidine, inosine and xanthosine as substrates. Also catalyzes the reverse reactions. The polypeptide is Pyrimidine/purine nucleoside phosphorylase (Salmonella heidelberg (strain SL476)).